The sequence spans 360 residues: Phospho-N-acetylmuramoyl-pentapeptide-transferase (360 aa).

Helical transmembrane passes span 26–46 (AIVSLLTALFISLWMGPRMIA), 72–92 (PTMGGIMILTAITVSVLLWAY), 94–114 (SNPYVWCVLTVLIGYGIIGFV), 132–152 (WKYFWMSVIALGVAFALYLAG), 168–188 (VMPQLGLLYILLAYFVIVGTG), 199–219 (GLAIMPTVFVAAGFALVAWAT), 236–256 (AGELVIVCTAIVGAGLGFLWF), 263–283 (VFMGDVGSLALGGALGIIAVL), 288–308 (FLLVIMGGVFVVETLSVILQV), and 338–358 (VIVRFWIISLMLVLIGLATLK).

The protein belongs to the glycosyltransferase 4 family. MraY subfamily. Requires Mg(2+) as cofactor.

The protein localises to the cell inner membrane. It catalyses the reaction UDP-N-acetyl-alpha-D-muramoyl-L-alanyl-gamma-D-glutamyl-meso-2,6-diaminopimeloyl-D-alanyl-D-alanine + di-trans,octa-cis-undecaprenyl phosphate = di-trans,octa-cis-undecaprenyl diphospho-N-acetyl-alpha-D-muramoyl-L-alanyl-D-glutamyl-meso-2,6-diaminopimeloyl-D-alanyl-D-alanine + UMP. It participates in cell wall biogenesis; peptidoglycan biosynthesis. Catalyzes the initial step of the lipid cycle reactions in the biosynthesis of the cell wall peptidoglycan: transfers peptidoglycan precursor phospho-MurNAc-pentapeptide from UDP-MurNAc-pentapeptide onto the lipid carrier undecaprenyl phosphate, yielding undecaprenyl-pyrophosphoryl-MurNAc-pentapeptide, known as lipid I. The polypeptide is Phospho-N-acetylmuramoyl-pentapeptide-transferase (Klebsiella pneumoniae (strain 342)).